A 162-amino-acid polypeptide reads, in one-letter code: Ribonuclease H (162 aa).

In terms of domain architecture, RNase H type-1 spans 1–141; it reads MKRIEIFTDG…ADALARAGMA (141 aa). Residues Asp9, Glu47, Asp69, and Asp133 each coordinate Mg(2+). The disordered stretch occupies residues 139–162; sequence GMAPFKKKKGGDTASSEEGSARRR.

Belongs to the RNase H family. As to quaternary structure, monomer. The cofactor is Mg(2+).

It is found in the cytoplasm. It carries out the reaction Endonucleolytic cleavage to 5'-phosphomonoester.. Functionally, endonuclease that specifically degrades the RNA of RNA-DNA hybrids. This is Ribonuclease H from Chelativorans sp. (strain BNC1).